The following is a 300-amino-acid chain: Iodotyrosine deiodinase (300 aa).

A helical membrane pass occupies residues 15–31; that stretch reads VGLISVSIAAGVALGQL. FMN is bound by residues 110–114, Ser-138, and 138–139; these read RRSVR and SG. 3,5-diiodo-L-tyrosine contacts are provided by Ala-140, Glu-167, Tyr-171, and Lys-192. Residues Ala-140, Glu-167, Tyr-171, and Lys-192 each contribute to the 3-iodo-L-tyrosine site. FMN contacts are provided by residues 247–249 and Arg-289; that span reads TTT.

This sequence belongs to the nitroreductase family. It depends on FMN as a cofactor. In terms of processing, may be cleaved at Gln-55. The cleaved form retains catalytic activity.

The protein resides in the membrane. It catalyses the reaction 2 iodide + L-tyrosine + 2 NADP(+) = 3,5-diiodo-L-tyrosine + 2 NADPH + H(+). It carries out the reaction iodide + L-tyrosine + NADP(+) = 3-iodo-L-tyrosine + NADPH. The catalysed reaction is 3-iodo-L-tyrosine + iodide + NADP(+) = 3,5-diiodo-L-tyrosine + NADPH + H(+). The enzyme catalyses L-tyrosine + chloride + NADP(+) = 3-chloro-L-tyrosine + NADPH. It catalyses the reaction bromide + L-tyrosine + NADP(+) = 3-bromo-L-tyrosine + NADPH. Its function is as follows. Catalyzes the dehalogenation of halotyrosines such as 3,5-diiodo-L-tyrosine. Likely to also catalyze the dehalogenation of other halotyrosines such as 3-bromo-L-tyrosine, 3-chloro-L-tyrosine and 3-iodo-L-tyrosine. In Daphnia pulex (Water flea), this protein is Iodotyrosine deiodinase.